Here is a 165-residue protein sequence, read N- to C-terminus: MSHPALTQLRALRYFDQIPALSPEQLDWLLLEDSMTKRFEQQGKNVTVTLIQEGFVSSDEVSSELPLLPKEERYWLREILLCADGEPWLAGRTVVPESTLSGPELALQTLGKTPLGRYLFTSSELTRDFIEIGRDADLWGRRSRLRLSGKPLMLTELFLPASPLY.

Met-35, Arg-77, Leu-115, and Glu-156 together coordinate substrate.

It belongs to the UbiC family. Monomer.

Its subcellular location is the cytoplasm. The catalysed reaction is chorismate = 4-hydroxybenzoate + pyruvate. The protein operates within cofactor biosynthesis; ubiquinone biosynthesis. Removes the pyruvyl group from chorismate, with concomitant aromatization of the ring, to provide 4-hydroxybenzoate (4HB) for the ubiquinone pathway. This is Chorismate pyruvate-lyase from Enterobacter sp. (strain 638).